We begin with the raw amino-acid sequence, 880 residues long: Beta-glucosidase 2 (880 aa).

An N-terminal signal peptide occupies residues 1 to 17 (MLLILELLVLIIGLGVA). N-linked (GlcNAc...) asparagine glycosylation is found at asparagine 24, asparagine 77, and asparagine 271. The active site involves aspartate 299. N-linked (GlcNAc...) asparagine glycosylation is found at asparagine 336, asparagine 343, asparagine 376, asparagine 548, asparagine 589, asparagine 712, asparagine 743, and asparagine 794.

This sequence belongs to the glycosyl hydrolase 3 family.

It catalyses the reaction Hydrolysis of terminal, non-reducing beta-D-glucosyl residues with release of beta-D-glucose.. Its pathway is glycan metabolism; cellulose degradation. This chain is Beta-glucosidase 2 (BGL2), found in Saccharomycopsis fibuligera (Yeast).